Reading from the N-terminus, the 363-residue chain is Pyrimidine monooxygenase RutA (363 aa).

FMN is bound by residues 49–50 (IK), Asn-115, Glu-124, 140–141 (RY), and Ser-190.

This sequence belongs to the NtaA/SnaA/DszA monooxygenase family. RutA subfamily.

It catalyses the reaction uracil + FMNH2 + NADH + O2 = (Z)-3-ureidoacrylate + FMN + NAD(+) + H2O + H(+). It carries out the reaction thymine + FMNH2 + NADH + O2 = (Z)-2-methylureidoacrylate + FMN + NAD(+) + H2O + H(+). Catalyzes the pyrimidine ring opening between N-3 and C-4 by an unusual flavin hydroperoxide-catalyzed mechanism, adding oxygen atoms in the process to yield ureidoacrylate peracid, that immediately reacts with FMN forming ureidoacrylate and FMN-N(5)-oxide. The FMN-N(5)-oxide reacts spontaneously with NADH to produce FMN. Requires the flavin reductase RutF to regenerate FMN in vivo. This is Pyrimidine monooxygenase RutA from Pantoea ananatis (strain LMG 20103).